The following is a 545-amino-acid chain: Probable acyl-activating enzyme 4 (545 aa).

It belongs to the ATP-dependent AMP-binding enzyme family. As to expression, expressed in roots, leaves, stems, flowers and developing seeds.

In terms of biological role, may act as an acid--thiol ligase that activates carboxylic acids by forming acyl-CoAs. In Arabidopsis thaliana (Mouse-ear cress), this protein is Probable acyl-activating enzyme 4 (AEE4).